The following is a 609-amino-acid chain: MESTAYPLNLSLKEEEEEEEIQSRELEDGPADMQKVRICSEGGWVPALFDEVAIYFSDEEWEVLTEQQKALYREVMRMNYETVLSLEFPFPKPDMITRLEGEEESQNSDEWQLQGGTSAENEESDVKPPDWPNPMNATSQFPQPQHFDSFGLRLPRDITELPEWSEGYPFYMAMGFPGYDLSADDIAGKFQFSRGMRRSYDAGFKLMVVEYAESTNNCQAAKQFGVLEKNVRDWRKVKPQLQNAHAMRRAFRGPKNGRFALVDQRVAEYVRYMQAKGDPITREAMQLKALEIAQEMNIPEKGFKASLGWCRRMMRRYDLSLRHKVPVPQHLPEDLTEKLVTYQRSVLALRRAHDYEVAQMGNADETPICLEVPSRVTVDNQGEKPVLVKTPGREKLKITAMLGVLADGRKLPPYIILRGTYIPPGKFPSGMEIRCHRYGWMTEDLMQDWLEVVWRRRTGAVPKQRGMLILNGFRGHATDSVKNSMESMNTDMVIIPGGLTSQLQVLDVVVYKPLNDSVRAQYSNWLLAGNLALSPTGNAKKPPLGLFLEWVMVAWNSISSESIVQGFKKCHISSNLEEEDDVLWEIESELPGGGEPPKDCDTESMAESN.

2 disordered regions span residues 1-28 (MEST…ELED) and 100-127 (EGEE…SDVK). The stretch at 8–28 (LNLSLKEEEEEEEIQSRELED) forms a coiled coil. Lys-13 participates in a covalent cross-link: Glycyl lysine isopeptide (Lys-Gly) (interchain with G-Cter in SUMO2). Positions 47–118 (ALFDEVAIYF…DEWQLQGGTS (72 aa)) constitute a KRAB domain. The segment covering 108 to 119 (SDEWQLQGGTSA) has biased composition (polar residues). Positions 250-323 (AFRGPKNGRF…MRRYDLSLRH (74 aa)) constitute an HTH CENPB-type domain. One can recognise a DDE-1 domain in the interval 353 to 567 (HDYEVAQMGN…ISSESIVQGF (215 aa)). A Glycyl lysine isopeptide (Lys-Gly) (interchain with G-Cter in SUMO2) cross-link involves residue Lys-384. The segment at 588–609 (SELPGGGEPPKDCDTESMAESN) is disordered.

It is found in the nucleus. The chain is Pogo transposable element with KRAB domain (POGK) from Homo sapiens (Human).